We begin with the raw amino-acid sequence, 427 residues long: Protein adenylyltransferase Fic (427 aa).

Residues 17 to 37 (LLLASLAGLSIAIIVTHAPVF) traverse the membrane as a helical segment. TPR repeat units lie at residues 77 to 110 (ALAALKAASAMKHGGKHSKAVKLFQQAVSLAPHH) and 111 to 143 (PEILLQYGEFLEQHDVVQAEHLYNRALTANPLD). Residues 200-205 (SNAIEG) carry the Inhibitory (S/T)XXXE(G/N) motif motif. ATP is bound by residues glutamate 204 and 286–289 (VSDH). Residues 255 to 390 (ITIDDIIEIH…IRPFIRFVAR (136 aa)) enclose the Fido domain. Histidine 333 is a catalytic residue. Residues 337-344 (DGNGRTAR), 369-370 (YY), and asparagine 377 each bind ATP.

This sequence belongs to the fic family. In terms of assembly, homodimer.

It localises to the membrane. The enzyme catalyses L-tyrosyl-[protein] + ATP = O-(5'-adenylyl)-L-tyrosyl-[protein] + diphosphate. The catalysed reaction is L-threonyl-[protein] + ATP = 3-O-(5'-adenylyl)-L-threonyl-[protein] + diphosphate. It carries out the reaction 3-O-(5'-adenylyl)-L-threonyl-[protein] + H2O = L-threonyl-[protein] + AMP + H(+). With respect to regulation, the side chain of Glu-204 determines which of the two opposing activities (AMPylase or de-AMPylase) will take place. In response to endoplasmic reticulum stress, mediates de-AMPylase activity. Adenylyltransferase activity is inhibited by the inhibitory helix present at the N-terminus: Glu-204 binds ATP and competes with ATP-binding at Arg-344, thereby preventing adenylyltransferase activity. In unstressed cells, disengagement of Glu-204 promotes adenylyltransferase activity. Activation dissociates ATP-binding from Glu-204, allowing ordered binding of the entire ATP moiety with the alpha-phosphate in an orientation that is productive for accepting an incoming target hydroxyl side chain. Its function is as follows. Protein that can both mediate the addition of adenosine 5'-monophosphate (AMP) to specific residues of target proteins (AMPylation), and the removal of the same modification from target proteins (de-AMPylation), depending on the context. The side chain of Glu-204 determines which of the two opposing activities (AMPylase or de-AMPylase) will take place. Acts as a key regulator of the unfolded protein response (UPR) by mediating AMPylation or de-AMPylation of Hsc70-3/BiP. In unstressed cells, acts as an adenylyltransferase by mediating AMPylation of Hsc70-3/BiP, thereby inactivating it. In response to endoplasmic reticulum stress, acts as a phosphodiesterase by mediating removal of ATP (de-AMPylation) from Hsc70-3/BiP, leading to restore HSPA5/BiP activity. The polypeptide is Protein adenylyltransferase Fic (Nematostella vectensis (Starlet sea anemone)).